Here is a 399-residue protein sequence, read N- to C-terminus: Bifunctional enzyme IspD/IspF (399 aa).

The 2-C-methyl-D-erythritol 4-phosphate cytidylyltransferase stretch occupies residues 1–235; it reads METWALILAA…MVEQPKTTVP (235 aa). Residues 236–399 are 2-C-methyl-D-erythritol 2,4-cyclodiphosphate synthase; sequence IVGYGYDVHK…IVIVTAIRIS (164 aa). A divalent metal cation is bound by residues aspartate 242 and histidine 244. 4-CDP-2-C-methyl-D-erythritol 2-phosphate contacts are provided by residues 242 to 244 and 275 to 276; these read DVH and HS. A divalent metal cation is bound at residue histidine 283. 4-CDP-2-C-methyl-D-erythritol 2-phosphate is bound by residues 297 to 299, 302 to 306, 373 to 376, and phenylalanine 380; these read DIG, FPDSD, and TTEE.

It in the N-terminal section; belongs to the IspD/TarI cytidylyltransferase family. IspD subfamily. This sequence in the C-terminal section; belongs to the IspF family. A divalent metal cation is required as a cofactor.

The catalysed reaction is 2-C-methyl-D-erythritol 4-phosphate + CTP + H(+) = 4-CDP-2-C-methyl-D-erythritol + diphosphate. It carries out the reaction 4-CDP-2-C-methyl-D-erythritol 2-phosphate = 2-C-methyl-D-erythritol 2,4-cyclic diphosphate + CMP. It functions in the pathway isoprenoid biosynthesis; isopentenyl diphosphate biosynthesis via DXP pathway; isopentenyl diphosphate from 1-deoxy-D-xylulose 5-phosphate: step 2/6. It participates in isoprenoid biosynthesis; isopentenyl diphosphate biosynthesis via DXP pathway; isopentenyl diphosphate from 1-deoxy-D-xylulose 5-phosphate: step 4/6. Bifunctional enzyme that catalyzes the formation of 4-diphosphocytidyl-2-C-methyl-D-erythritol from CTP and 2-C-methyl-D-erythritol 4-phosphate (MEP) (IspD), and catalyzes the conversion of 4-diphosphocytidyl-2-C-methyl-D-erythritol 2-phosphate (CDP-ME2P) to 2-C-methyl-D-erythritol 2,4-cyclodiphosphate (ME-CPP) with a corresponding release of cytidine 5-monophosphate (CMP) (IspF). This chain is Bifunctional enzyme IspD/IspF, found in Lawsonia intracellularis (strain PHE/MN1-00).